The primary structure comprises 21 residues: Fibrinogen beta chain (21 aa).

Pyrrolidone carboxylic acid is present on Gln1. Tyr6 bears the Sulfotyrosine mark.

As to quaternary structure, heterohexamer; disulfide linked. Contains 2 sets of 3 non-identical chains (alpha, beta and gamma). The 2 heterotrimers are in head to head conformation with the N-termini in a small central domain. Post-translationally, conversion of fibrinogen to fibrin is triggered by thrombin, which cleaves fibrinopeptides A and B from alpha and beta chains, and thus exposes the N-terminal polymerization sites responsible for the formation of the soft clot.

The protein localises to the secreted. In terms of biological role, cleaved by the protease thrombin to yield monomers which, together with fibrinogen alpha (FGA) and fibrinogen gamma (FGG), polymerize to form an insoluble fibrin matrix. Fibrin has a major function in hemostasis as one of the primary components of blood clots. In addition, functions during the early stages of wound repair to stabilize the lesion and guide cell migration during re-epithelialization. Was originally thought to be essential for platelet aggregation, based on in vitro studies using anticoagulated blood. However subsequent studies have shown that it is not absolutely required for thrombus formation in vivo. Enhances expression of SELP in activated platelets. Maternal fibrinogen is essential for successful pregnancy. Fibrin deposition is also associated with infection, where it protects against IFNG-mediated hemorrhage. May also facilitate the antibacterial immune response via both innate and T-cell mediated pathways. This chain is Fibrinogen beta chain (FGB), found in Rangifer tarandus (Reindeer).